A 410-amino-acid polypeptide reads, in one-letter code: MTPDSCPVRPEPTLSFTQGLIVGQISVVFLIAAFIKFFIFGDPPSAEETASLRASERRSRTLAHKKSLLSLRTSNQRPGSQQQQSVLNRKKSSILRSGPPSLTIGSILNKTYYRVESHQPESLDWFNVLVAQTIAQFRSDAQHDDAILTSLTKALNGTSRPSFLDEIRVTELSLGEDFPIFSNCRIIPVDEDGLDFGPGKAFDANMATRDGGTLQARMDVDLSDMITLALETKLLLNYPKKLTAVLPVALAVSVVRFSGTLAISFIPSNPSQSTPTKMVFNFLDDYRLDFSIRSLVGSRSRLQDVPKIAQLVESRLHRWFDERCVEPRFQEIPLPSMWPRKKNARGGDDAIADVERSMSKAKGADVARDLRREVLVEAEARQAAQRDSLRYRRPRADDAFPMPGSLAVDD.

Topologically, residues 1–19 are lumenal; that stretch reads MTPDSCPVRPEPTLSFTQG. A helical transmembrane segment spans residues 20–40; the sequence is LIVGQISVVFLIAAFIKFFIF. At 41–410 the chain is on the cytoplasmic side; the sequence is GDPPSAEETA…PMPGSLAVDD (370 aa). The span at 71-87 shows a compositional bias: polar residues; sequence LRTSNQRPGSQQQQSVL. A disordered region spans residues 71–98; sequence LRTSNQRPGSQQQQSVLNRKKSSILRSG. An SMP-LTD domain is found at 119–335; sequence QPESLDWFNV…EPRFQEIPLP (217 aa). The segment at 380-410 is disordered; the sequence is ARQAAQRDSLRYRRPRADDAFPMPGSLAVDD. Over residues 387–398 the composition is skewed to basic and acidic residues; sequence DSLRYRRPRADD.

Belongs to the MMM1 family. As to quaternary structure, homodimer. Component of the ER-mitochondria encounter structure (ERMES) or MDM complex, composed of MMM1, MDM10, MDM12 and MDM34. An MMM1 homodimer associates with one molecule of MDM12 on each side in a pairwise head-to-tail manner, and the SMP-LTD domains of MMM1 and MDM12 generate a continuous hydrophobic tunnel for phospholipid trafficking.

It is found in the endoplasmic reticulum membrane. Its function is as follows. Component of the ERMES/MDM complex, which serves as a molecular tether to connect the endoplasmic reticulum (ER) and mitochondria. Components of this complex are involved in the control of mitochondrial shape and protein biogenesis, and function in nonvesicular lipid trafficking between the ER and mitochondria. The MDM12-MMM1 subcomplex functions in the major beta-barrel assembly pathway that is responsible for biogenesis of all outer membrane beta-barrel proteins, and acts in a late step after the SAM complex. The MDM10-MDM12-MMM1 subcomplex further acts in the TOM40-specific pathway after the action of the MDM12-MMM1 complex. Essential for establishing and maintaining the structure of mitochondria and maintenance of mtDNA nucleoids. This Pyricularia oryzae (strain 70-15 / ATCC MYA-4617 / FGSC 8958) (Rice blast fungus) protein is Maintenance of mitochondrial morphology protein 1.